Here is a 477-residue protein sequence, read N- to C-terminus: Methylenetetrahydrofolate--tRNA-(uracil-5-)-methyltransferase TrmFO (477 aa).

14 to 19 (GGGLAG) contributes to the FAD binding site.

This sequence belongs to the MnmG family. TrmFO subfamily. Requires FAD as cofactor.

It localises to the cytoplasm. It carries out the reaction uridine(54) in tRNA + (6R)-5,10-methylene-5,6,7,8-tetrahydrofolate + NADH + H(+) = 5-methyluridine(54) in tRNA + (6S)-5,6,7,8-tetrahydrofolate + NAD(+). The enzyme catalyses uridine(54) in tRNA + (6R)-5,10-methylene-5,6,7,8-tetrahydrofolate + NADPH + H(+) = 5-methyluridine(54) in tRNA + (6S)-5,6,7,8-tetrahydrofolate + NADP(+). Its function is as follows. Catalyzes the folate-dependent formation of 5-methyl-uridine at position 54 (M-5-U54) in all tRNAs. The chain is Methylenetetrahydrofolate--tRNA-(uracil-5-)-methyltransferase TrmFO from Rhizobium johnstonii (strain DSM 114642 / LMG 32736 / 3841) (Rhizobium leguminosarum bv. viciae).